Here is a 298-residue protein sequence, read N- to C-terminus: 4-hydroxy-tetrahydrodipicolinate synthase (298 aa).

Pyruvate is bound at residue Thr51. Catalysis depends on Tyr139, which acts as the Proton donor/acceptor. The active-site Schiff-base intermediate with substrate is Lys167. Ile209 contacts pyruvate.

This sequence belongs to the DapA family. Homotetramer; dimer of dimers.

The protein localises to the cytoplasm. The enzyme catalyses L-aspartate 4-semialdehyde + pyruvate = (2S,4S)-4-hydroxy-2,3,4,5-tetrahydrodipicolinate + H2O + H(+). The protein operates within amino-acid biosynthesis; L-lysine biosynthesis via DAP pathway; (S)-tetrahydrodipicolinate from L-aspartate: step 3/4. Functionally, catalyzes the condensation of (S)-aspartate-beta-semialdehyde [(S)-ASA] and pyruvate to 4-hydroxy-tetrahydrodipicolinate (HTPA). This Histophilus somni (strain 2336) (Haemophilus somnus) protein is 4-hydroxy-tetrahydrodipicolinate synthase.